The following is a 309-amino-acid chain: MILTVTMNPSIDISYPLEELKIDTVNRVSEVSKTAGGKGLNVTRVLAEIGDNVAATGLIGGTNGEFLLQNLNQAVRPLFYNISGDTRNCIAILHESKQTEILEAGPTITVDEANGFLHHFKSLMESAEVVSISGSLPAGLPVEYYIQLVEIANQAGNKVVLDCSGAALEAVLKSDVKPTAIKPNNEELSQLLGREVSKDLDELKAVLSEPLFDGIEWIIVSLGADGAFAKHWETFYKVDIPKIQVVNPVGSGDSTVAGISSALSHQADDVSLLKKANVLGMLNAQEKMTGHVNVENYDDLYNQITVKEV.

The protein belongs to the carbohydrate kinase PfkB family. LacC subfamily.

The enzyme catalyses D-tagatofuranose 6-phosphate + ATP = D-tagatofuranose 1,6-bisphosphate + ADP + H(+). The protein operates within carbohydrate metabolism; D-tagatose 6-phosphate degradation; D-glyceraldehyde 3-phosphate and glycerone phosphate from D-tagatose 6-phosphate: step 1/2. This Streptococcus sanguinis (strain SK36) protein is Tagatose-6-phosphate kinase.